The following is a 278-amino-acid chain: HTH-type transcriptional activator RhaS (278 aa).

An HTH araC/xylS-type domain is found at 174-272 (NQLMAWLEEH…NWSPRDIRQG (99 aa)). 2 consecutive DNA-binding regions (H-T-H motif) follow at residues 191–212 (EAVA…KQHT) and 239–262 (VTEI…RREF).

Binds DNA as a dimer.

The protein localises to the cytoplasm. Activates expression of the rhaBAD and rhaT operons. This Salmonella schwarzengrund (strain CVM19633) protein is HTH-type transcriptional activator RhaS.